Consider the following 246-residue polypeptide: Phycobilisome rod-core linker polypeptide CpcG2 (246 aa).

Residues Ser11 to Arg189 enclose the PBS-linker domain. The interval Asp224 to Arg246 is disordered. Over residues Ala235–Arg246 the composition is skewed to polar residues.

This sequence belongs to the phycobilisome linker protein family. As to quaternary structure, the phycobilisome is a hemidiscoidal structure that is composed of two distinct substructures: a core complex and a number of rods radiating from the core.

Its subcellular location is the cellular thylakoid membrane. Rod-core linker protein required for attachment of phycocyanin to allophycocyanin in cores of phycobilisomes. Its function is as follows. Linker polypeptides determine the state of aggregation and the location of the disk-shaped phycobiliprotein units within the phycobilisome and modulate their spectroscopic properties in order to mediate a directed and optimal energy transfer. The protein is Phycobilisome rod-core linker polypeptide CpcG2 (cpcG2) of Thermosynechococcus vestitus (strain NIES-2133 / IAM M-273 / BP-1).